The sequence spans 1217 residues: ATP-dependent helicase/nuclease subunit A (1217 aa).

Residues 10-475 (VIWTDAQWQS…IDLSQNFRSR (466 aa)) form the UvrD-like helicase ATP-binding domain. 31–38 (AAAGSGKT) contacts ATP. The UvrD-like helicase C-terminal domain occupies 476–786 (KEVLSTTNYI…RMMTIHSSKG (311 aa)).

Belongs to the helicase family. AddA subfamily. As to quaternary structure, heterodimer of AddA and AddB/RexB. It depends on Mg(2+) as a cofactor.

The catalysed reaction is Couples ATP hydrolysis with the unwinding of duplex DNA by translocating in the 3'-5' direction.. It carries out the reaction ATP + H2O = ADP + phosphate + H(+). Its function is as follows. The heterodimer acts as both an ATP-dependent DNA helicase and an ATP-dependent, dual-direction single-stranded exonuclease. Recognizes the chi site generating a DNA molecule suitable for the initiation of homologous recombination. The AddA nuclease domain is required for chi fragment generation; this subunit has the helicase and 3' -&gt; 5' nuclease activities. This chain is ATP-dependent helicase/nuclease subunit A, found in Staphylococcus aureus (strain USA300).